Reading from the N-terminus, the 229-residue chain is Sugar fermentation stimulation protein homolog (229 aa).

This sequence belongs to the SfsA family.

This chain is Sugar fermentation stimulation protein homolog, found in Caldanaerobacter subterraneus subsp. tengcongensis (strain DSM 15242 / JCM 11007 / NBRC 100824 / MB4) (Thermoanaerobacter tengcongensis).